Consider the following 337-residue polypeptide: UDP-3-O-acylglucosamine N-acyltransferase 1 (337 aa).

H238 (proton acceptor) is an active-site residue.

The protein belongs to the transferase hexapeptide repeat family. LpxD subfamily. In terms of assembly, homotrimer.

It catalyses the reaction a UDP-3-O-[(3R)-3-hydroxyacyl]-alpha-D-glucosamine + a (3R)-hydroxyacyl-[ACP] = a UDP-2-N,3-O-bis[(3R)-3-hydroxyacyl]-alpha-D-glucosamine + holo-[ACP] + H(+). It functions in the pathway bacterial outer membrane biogenesis; LPS lipid A biosynthesis. Catalyzes the N-acylation of UDP-3-O-acylglucosamine using 3-hydroxyacyl-ACP as the acyl donor. Is involved in the biosynthesis of lipid A, a phosphorylated glycolipid that anchors the lipopolysaccharide to the outer membrane of the cell. The chain is UDP-3-O-acylglucosamine N-acyltransferase 1 from Koribacter versatilis (strain Ellin345).